Consider the following 274-residue polypeptide: 2,3,4,5-tetrahydropyridine-2,6-dicarboxylate N-succinyltransferase (274 aa).

Substrate-binding residues include Arg104 and Asp141.

This sequence belongs to the transferase hexapeptide repeat family. In terms of assembly, homotrimer.

Its subcellular location is the cytoplasm. The catalysed reaction is (S)-2,3,4,5-tetrahydrodipicolinate + succinyl-CoA + H2O = (S)-2-succinylamino-6-oxoheptanedioate + CoA. It functions in the pathway amino-acid biosynthesis; L-lysine biosynthesis via DAP pathway; LL-2,6-diaminopimelate from (S)-tetrahydrodipicolinate (succinylase route): step 1/3. This Escherichia coli O157:H7 protein is 2,3,4,5-tetrahydropyridine-2,6-dicarboxylate N-succinyltransferase (dapD).